A 443-amino-acid polypeptide reads, in one-letter code: Putative type II methyltransferase M.BsuMIIP (443 aa).

The SAM-dependent MTase C5-type domain occupies 4–440; that stretch reads LRVMSLFSGI…QELIHTYVNK (437 aa). The active site involves Cys-78.

It belongs to the class I-like SAM-binding methyltransferase superfamily. C5-methyltransferase family.

It carries out the reaction a 2'-deoxycytidine in DNA + S-adenosyl-L-methionine = a 5-methyl-2'-deoxycytidine in DNA + S-adenosyl-L-homocysteine + H(+). A putative methylase, recognizes the double-stranded sequence 5'-GGCC-3', methylates C-?. There is no known cognate restriction enzyme. This is Putative type II methyltransferase M.BsuMIIP (mtbP) from Bacillus subtilis (strain 168).